The chain runs to 360 residues: Nucleoporin SEH1 (360 aa).

WD repeat units lie at residues 10 to 49 (DHKD…EWHC), 55 to 96 (THSG…SNDK), 111 to 152 (DSRT…NLSQ), 160 to 210 (SCKL…RKYA), 217 to 258 (TVTD…KELT), and 276 to 315 (NHNS…NWKC). Lys-12 is covalently cross-linked (Glycyl lysine isopeptide (Lys-Gly) (interchain with G-Cter in SUMO2)). Ser-190 is modified (phosphoserine). Residues 324 to 342 (SPVNGSSQQGNSNPSVGSN) are compositionally biased toward low complexity. The tract at residues 324–360 (SPVNGSSQQGNSNPSVGSNIPSLQNSLNGSSAGRKHS) is disordered. Positions 343–354 (IPSLQNSLNGSS) are enriched in polar residues.

It belongs to the WD repeat SEC13 family. Component of the Nup107-160 subcomplex of the nuclear pore complex (NPC). The Nup107-160 subcomplex includes NUP160, NUP133, NUP107, NUP98, NUP85, NUP43, NUP37, SEH1 and SEC13. The SEH1 subunit appears to be only weakly associated with the Nup107-160 subcomplex. Component of the GATOR2 subcomplex, composed of MIOS, SEC13, SEH1L, WDR24 and WDR59. The GATOR2 complex interacts with CASTOR1 and CASTOR2; the interaction is negatively regulated by arginine. The GATOR2 complex interacts with SESN1, SESN2 and SESN3; the interaction is negatively regulated by amino acids. SESN1, SESN2 and SESN3 convey leucine availability via direct interaction with SEH1L and WDR24.

The protein localises to the chromosome. It localises to the centromere. It is found in the kinetochore. Its subcellular location is the nucleus. The protein resides in the nuclear pore complex. The protein localises to the lysosome membrane. The GATOR2 complex is negatively regulated by the upstream amino acid sensors CASTOR1 and SESN2, which sequester the GATOR2 complex in absence of amino acids. In the presence of abundant amino acids, GATOR2 is released from CASTOR1 and SESN2 and activated. Component of the Nup107-160 subcomplex of the nuclear pore complex (NPC). The Nup107-160 subcomplex is required for the assembly of a functional NPC. The Nup107-160 subcomplex is also required for normal kinetochore microtubule attachment, mitotic progression and chromosome segregation. This subunit plays a role in recruitment of the Nup107-160 subcomplex to the kinetochore. In terms of biological role, as a component of the GATOR2 complex, functions as an activator of the amino acid-sensing branch of the mTORC1 signaling pathway. The GATOR2 complex indirectly activates mTORC1 through the inhibition of the GATOR1 subcomplex. GATOR2 probably acts as an E3 ubiquitin-protein ligase toward GATOR1. In the presence of abundant amino acids, the GATOR2 complex mediates ubiquitination of the NPRL2 core component of the GATOR1 complex, leading to GATOR1 inactivation. In the absence of amino acids, GATOR2 is inhibited, activating the GATOR1 complex. Within the GATOR2 complex, SEC13 and SEH1L are required to stabilize the complex. The polypeptide is Nucleoporin SEH1 (SEH1L) (Bos taurus (Bovine)).